Here is a 431-residue protein sequence, read N- to C-terminus: Enolase (431 aa).

Position 167 (Gln167) interacts with (2R)-2-phosphoglycerate. Glu209 functions as the Proton donor in the catalytic mechanism. Residues Asp246, Glu287, and Asp314 each contribute to the Mg(2+) site. (2R)-2-phosphoglycerate is bound by residues Lys339, Arg368, Ser369, and Lys390. Lys339 acts as the Proton acceptor in catalysis.

Belongs to the enolase family. The cofactor is Mg(2+).

It is found in the cytoplasm. The protein resides in the secreted. The protein localises to the cell surface. The catalysed reaction is (2R)-2-phosphoglycerate = phosphoenolpyruvate + H2O. The protein operates within carbohydrate degradation; glycolysis; pyruvate from D-glyceraldehyde 3-phosphate: step 4/5. In terms of biological role, catalyzes the reversible conversion of 2-phosphoglycerate (2-PG) into phosphoenolpyruvate (PEP). It is essential for the degradation of carbohydrates via glycolysis. This Prochlorococcus marinus (strain MIT 9303) protein is Enolase.